Consider the following 345-residue polypeptide: S-adenosylmethionine:tRNA ribosyltransferase-isomerase (345 aa).

It belongs to the QueA family. As to quaternary structure, monomer.

It localises to the cytoplasm. It carries out the reaction 7-aminomethyl-7-carbaguanosine(34) in tRNA + S-adenosyl-L-methionine = epoxyqueuosine(34) in tRNA + adenine + L-methionine + 2 H(+). Its pathway is tRNA modification; tRNA-queuosine biosynthesis. Transfers and isomerizes the ribose moiety from AdoMet to the 7-aminomethyl group of 7-deazaguanine (preQ1-tRNA) to give epoxyqueuosine (oQ-tRNA). The sequence is that of S-adenosylmethionine:tRNA ribosyltransferase-isomerase from Acinetobacter baumannii (strain AB0057).